Here is an 855-residue protein sequence, read N- to C-terminus: Cone cGMP-specific 3',5'-cyclic phosphodiesterase subunit alpha' (855 aa).

2 GAF domains span residues 70–219 and 251–428; these read SVEL…SIIL and DVER…GWSL. 3',5'-cyclic GMP is bound by residues serine 92, serine 116, 164-167, and threonine 171; that span reads DKQT. The region spanning 481 to 814 is the PDEase domain; that stretch reads EEKQLVTILK…VEWKSLADEY (334 aa). Histidine 557 (proton donor) is an active-site residue. 4 residues coordinate a divalent metal cation: histidine 561, histidine 597, aspartate 598, and aspartate 718. The disordered stretch occupies residues 823-855; that stretch reads EMKKQEEGNTTEKAVEDSGGGGDDKKSKTCLML. Residue cysteine 852 is modified to Cysteine methyl ester. Cysteine 852 carries S-geranylgeranyl cysteine lipidation. Positions 853–855 are cleaved as a propeptide — removed in mature form; sequence LML.

The protein belongs to the cyclic nucleotide phosphodiesterase family. Composed of two alpha' subunits that are associated with 3 smaller proteins of 11, 13, and 15 kDa. Requires a divalent metal cation as cofactor.

It is found in the cell membrane. The enzyme catalyses 3',5'-cyclic GMP + H2O = GMP + H(+). Functionally, as cone-specific cGMP phosphodiesterase, it plays an essential role in light detection and cone phototransduction by rapidly decreasing intracellular levels of cGMP. The chain is Cone cGMP-specific 3',5'-cyclic phosphodiesterase subunit alpha' (PDE6C) from Bos taurus (Bovine).